Reading from the N-terminus, the 911-residue chain is Brevican core protein (911 aa).

A signal peptide spans 1–22 (MAQLFLPLLAALVLAQAPAALA). An Ig-like V-type domain is found at 36–155 (RVRIAGDAPL…SSDAVEVKVK (120 aa)). 5 disulfide bridges follow: Cys57–Cys137, Cys179–Cys250, Cys203–Cys224, Cys277–Cys352, and Cys301–Cys322. An N-linked (GlcNAc...) asparagine glycan is attached at Asn130. 2 consecutive Link domains span residues 157 to 252 (VVFL…YCYA) and 257 to 354 (GELF…YCFR). An N-linked (GlcNAc...) asparagine glycan is attached at Asn337. Positions 391 to 641 (QLPQEATESE…PTDSASRGGV (251 aa)) are disordered. Residue Ser418 is modified to Phosphoserine. Ser418 carries an O-linked (Xyl...) (chondroitin sulfate) serine glycan. A compositionally biased stretch (acidic residues) spans 454-478 (EEEEKYEDEEEKEEEEEEEEVEDEA). O-glycosylated at two sites regions lie at residues 520–530 (SPLPDGESEAS) and 540–545 (TETLPT). The segment at 569-575 (TGGPELS) is O-glycosylated at one site. Residues 612–627 (EDNSGRTAPAGTSVQA) show a composition bias toward polar residues. Residue Ala646 is the site of GPI-anchor amidated alanine attachment. In terms of domain architecture, EGF-like spans 646–682 (ASGDCVPSPCHNGGTCLEEEEGVRCLCLPGYGGDLCD). Intrachain disulfides connect Cys650-Cys661, Cys655-Cys670, Cys672-Cys681, Cys688-Cys699, Cys716-Cys808, Cys784-Cys800, Cys815-Cys858, and Cys844-Cys871. Positions 695–809 (FQGACYKHFS…CNYHLSYTCK (115 aa)) constitute a C-type lectin domain. The region spanning 813–873 (VSCGPPPELP…WEAPQISCVP (61 aa)) is the Sushi domain. O-linked (GalNAc...) serine glycans are attached at residues Ser905 and Ser906.

This sequence belongs to the aggrecan/versican proteoglycan family. Interacts with TNR. Post-translationally, O-glycosylated; contains chondroitin sulfate. O-glycosylated with a core 1 or possibly core 8 glycan. In terms of tissue distribution, expressed in the retina, specifically in the inner nuclear layer, inner plexiform layer and ganglion cell layer (at protein level). Detected in cerebrospinal fluid (at protein level). Detected in urine (at protein level).

The protein resides in the secreted. Its subcellular location is the extracellular space. It is found in the extracellular matrix. It localises to the membrane. Functionally, may play a role in the terminally differentiating and the adult nervous system during postnatal development. Could stabilize interactions between hyaluronan (HA) and brain proteoglycans. The protein is Brevican core protein (BCAN) of Homo sapiens (Human).